The sequence spans 106 residues: COX assembly mitochondrial protein homolog (106 aa).

Ala-2 carries the N-acetylalanine modification. One can recognise a CHCH domain in the interval 28-71; that stretch reads RERCSEQVQDFTKCCKDSGVLMVVKCRKENSALKDCLTSYYKDP. Short sequence motifs (cx9C motif) lie at residues 31-41 and 53-63; these read CSEQVQDFTKC and CRKENSALKDC. 2 cysteine pairs are disulfide-bonded: Cys-31–Cys-63 and Cys-41–Cys-53.

It belongs to the CMC family. In terms of assembly, component of the MITRAC (mitochondrial translation regulation assembly intermediate of cytochrome c oxidase complex) complex, the core components of this complex being COA3/MITRAC12 and COX14.

It is found in the mitochondrion. Functionally, component of the MITRAC (mitochondrial translation regulation assembly intermediate of cytochrome c oxidase complex) complex, that regulates cytochrome c oxidase assembly. The polypeptide is COX assembly mitochondrial protein homolog (CMC1) (Bos taurus (Bovine)).